The sequence spans 910 residues: Valine--tRNA ligase (910 aa).

Positions 45–55 (PNVTGSLHMGH) match the 'HIGH' region motif. A 'KMSKS' region motif is present at residues 554–558 (KMSKS). Position 557 (Lys-557) interacts with ATP. The stretch at 842-910 (DLQAEAARLA…TAESRIRDAS (69 aa)) forms a coiled coil.

The protein belongs to the class-I aminoacyl-tRNA synthetase family. ValS type 1 subfamily. As to quaternary structure, monomer.

The protein resides in the cytoplasm. The enzyme catalyses tRNA(Val) + L-valine + ATP = L-valyl-tRNA(Val) + AMP + diphosphate. Catalyzes the attachment of valine to tRNA(Val). As ValRS can inadvertently accommodate and process structurally similar amino acids such as threonine, to avoid such errors, it has a 'posttransfer' editing activity that hydrolyzes mischarged Thr-tRNA(Val) in a tRNA-dependent manner. This chain is Valine--tRNA ligase, found in Brucella suis biovar 1 (strain 1330).